The chain runs to 63 residues: Large ribosomal subunit protein bL35 (63 aa).

This sequence belongs to the bacterial ribosomal protein bL35 family.

The sequence is that of Large ribosomal subunit protein bL35 from Campylobacter jejuni subsp. doylei (strain ATCC BAA-1458 / RM4099 / 269.97).